The following is a 484-amino-acid chain: Glutamate--tRNA ligase (484 aa).

Positions 11–21 match the 'HIGH' region motif; that stretch reads PSPTGLLHIGN. The short motif at 255–259 is the 'KMSKS' region element; the sequence is KLSKR. Lysine 258 is an ATP binding site.

This sequence belongs to the class-I aminoacyl-tRNA synthetase family. Glutamate--tRNA ligase type 1 subfamily. As to quaternary structure, monomer.

It localises to the cytoplasm. The catalysed reaction is tRNA(Glu) + L-glutamate + ATP = L-glutamyl-tRNA(Glu) + AMP + diphosphate. Functionally, catalyzes the attachment of glutamate to tRNA(Glu) in a two-step reaction: glutamate is first activated by ATP to form Glu-AMP and then transferred to the acceptor end of tRNA(Glu). The chain is Glutamate--tRNA ligase from Streptococcus suis (strain 98HAH33).